A 1037-amino-acid polypeptide reads, in one-letter code: MASSPTPSLDSMRGGANSIESYEHAGYLSDSPLTLSGSSPPASDSAICSDEYTGGSSVKSRSEVTVINGHHPISASVSSSSSASSSSCSSSSSSSSSSSSSSSSTSGLSGCGSTSSSVISANNVASSNGPGVIGSNLQSSNNGGNSGISSLVVGAGKGSNSSSNSSSSNTSANGSPPRCTACKSKCSDAVAKCFECQSYLCANCVTAHEFMHCFNGHNVCLIKGFEASTTGTPLSVGSPSNNPASNEFKYASSLTMMLQQQQQLDSQQQQQQQQLLPAQPMSQLSKIVLAAAAQANSQEQQREDSIYGSLHPQQQQQQQQQQQRQLFCPRHKQELLKFSCRTCCILVCKECIVLEHSTGLHELENVQSPGMTTSTGSTANESALQTLLADMRGKIGEIVGIAGNSDQNLTKVKLQYQKAHNELNETHQFFASMLDERKTELLKELETLYTAKVNSNNSWQQRSRDLIDKGLATCEAVERSPAPPSSLLTEALLLRKSLEQQLQTGIQEMQLPFEIEFMSNYQSIQAGVRNTFGYIRANSSDGGPTGMSLTSNGHGKQPPIARPTQSASNSSASSAGSGHHGHHQQSHHHGHHNHHQTAHHQQLQAQSSLHGLGLGLSGASLLDSSSSAGGAVGAFSNGGLLLGGRDRNALAVEQHFGELMPKRGGGGYTGSNGSATSAVAHYNPYEKWSNGGSDNLFSSVTSGVSGSSAVADAFASLSAVGGSVVSGAGAGGSTVSSESLLDLTNKLLSATIYPPKSQIKRQKMIYHCKFGEFGVMEGQFTEPSGVAVNAQNDIIVADTNNHRIQIFDKEGRFKFQFGECGKRDSQLLYPNRVAVVRNSGDIIVTERSPTHQIQIYNQYGQFVRKFGATILQHPRGVTVDNKGRIIVVECKVMRVIIFDQNGNVLHKFGCSKHLEFPNGVVVNDKQEIFISDNRAHCVKVFNYEGQYLRQIGGEGITNYPIGVGINSNGEILIADNHNNFNLTIFTQDGQLISALESKVKHAQCFDVALMDDGSVVLASKDYRLYIYRYVQLAPVGM.

Disordered regions lie at residues 29–63 (SDSP…SRSE) and 159–178 (SNSS…SPPR). Polar residues-rich tracts occupy residues 31–42 (SPLTLSGSSPPA) and 54–63 (GGSSVKSRSE). The span at 159 to 175 (SNSSSNSSSSNTSANGS) shows a compositional bias: low complexity. A B box-type 1; atypical zinc finger spans residues 174–222 (GSPPRCTACKSKCSDAVAKCFECQSYLCANCVTAHEFMHCFNGHNVCLI). 8 residues coordinate Zn(2+): Cys-179, Cys-182, Cys-204, His-208, Cys-328, His-331, Cys-351, and His-356. The B box-type 2 zinc finger occupies 323 to 366 (QRQLFCPRHKQELLKFSCRTCCILVCKECIVLEHSTGLHELENV). Residues 543–554 (GPTGMSLTSNGH) show a composition bias toward polar residues. The interval 543-606 (GPTGMSLTSN…TAHHQQLQAQ (64 aa)) is disordered. Residues 565-577 (QSASNSSASSAGS) are compositionally biased toward low complexity. The span at 579–598 (HHGHHQQSHHHGHHNHHQTA) shows a compositional bias: basic residues. 5 NHL repeats span residues 767–810 (HCKF…FDKE), 814–859 (KFQF…YNQY), 860–901 (GQFV…FDQN), 902–944 (GNVL…FNYE), and 945–988 (GQYL…FTQD).

As to quaternary structure, interacts with nanos (nos) and pum. Acts via the formation of a quaternary complex composed of pum, nanos, brat and the 3'-UTR mRNA of hb. Not recruited by nanos and pum to cyclin B 3'-UTR mRNA. Might interact with mira; the interaction seems to be important for brat localization during mitosis. Interacts with Ago1. Expressed during embryogenesis, mainly in nervous tissues. Expressed in the embryonic central and peripheral nervous systems including the embryonic brain. In third instar larva it is expressed in the larval central nervous system including the brain and the ventral ganglion, in two glands (the ring gland and the salivary gland, and in parts of the foregut) the gastric caeca and the proventriculus.

The protein localises to the cytoplasm. It localises to the cell cortex. An NHL-domain family protein that functions as a translational repressor to inhibit cell proliferation. Plays a central role in translation repression of hb mRNA by being recruited by nanos (nos) and pum to the Nanos Response Element (NRE), a 16 bp sequence in the hb mRNA 3'-UTR. Probably recruited by other proteins to repress translation of other mRNAs in other tissues. Negatively regulates expression of Myc in a 3'-UTR dependent manner in both neural progenitor and epithelial cells. Regulates expression of mei-P26, possibly at transcriptional level. Involved in the regulation of ribosomal RNA synthesis and cell growth. Participates in abdominal segmentation and imaginal disk development. During neuroblast division, segregates asymmetrically and inhibits self-renewal of one of the two daughter cells. Together with the asymmetrically segregating transcription factor prospero ensures that the daughter cell will stop growing, exit the cell cycle, and differentiate into neurons possibly by modulating the function of dm in ganglion mother cells (GMC). Restricts developmental potential of type II intermediary neuronal progenitor (INP) cells playing a role in proliferation and maturation of the neuroblasts. This is Protein brain tumor from Drosophila melanogaster (Fruit fly).